A 224-amino-acid polypeptide reads, in one-letter code: Ribosomal RNA small subunit methyltransferase G (224 aa).

Residues glycine 69, leucine 74, 119-120, and arginine 137 each bind S-adenosyl-L-methionine; that span reads AE.

It belongs to the methyltransferase superfamily. RNA methyltransferase RsmG family.

The protein localises to the cytoplasm. Specifically methylates the N7 position of guanine in position 518 of 16S rRNA. This is Ribosomal RNA small subunit methyltransferase G from Mycobacterium bovis (strain ATCC BAA-935 / AF2122/97).